Here is a 319-residue protein sequence, read N- to C-terminus: Methionyl-tRNA formyltransferase (319 aa).

S113–P116 contacts (6S)-5,6,7,8-tetrahydrofolate.

It belongs to the Fmt family.

The enzyme catalyses L-methionyl-tRNA(fMet) + (6R)-10-formyltetrahydrofolate = N-formyl-L-methionyl-tRNA(fMet) + (6S)-5,6,7,8-tetrahydrofolate + H(+). Attaches a formyl group to the free amino group of methionyl-tRNA(fMet). The formyl group appears to play a dual role in the initiator identity of N-formylmethionyl-tRNA by promoting its recognition by IF2 and preventing the misappropriation of this tRNA by the elongation apparatus. The chain is Methionyl-tRNA formyltransferase from Pseudomonas fluorescens (strain Pf0-1).